A 359-amino-acid polypeptide reads, in one-letter code: Molybdenum import ATP-binding protein ModC (359 aa).

Positions 1-229 (MLELNFSQQL…SALRPWLQRE (229 aa)) constitute an ABC transporter domain. Residue 31 to 38 (GLSGAGKT) coordinates ATP. A Mop domain is found at 289–354 (SSSIRNILPV…IKSVSFNRQN (66 aa)).

The protein belongs to the ABC transporter superfamily. Molybdate importer (TC 3.A.1.8) family. The complex is composed of two ATP-binding proteins (ModC), two transmembrane proteins (ModB) and a solute-binding protein (ModA).

The protein resides in the cell inner membrane. It catalyses the reaction molybdate(out) + ATP + H2O = molybdate(in) + ADP + phosphate + H(+). In terms of biological role, part of the ABC transporter complex ModABC involved in molybdenum import. Responsible for energy coupling to the transport system. In Yersinia pseudotuberculosis serotype I (strain IP32953), this protein is Molybdenum import ATP-binding protein ModC.